The primary structure comprises 239 residues: ATP-dependent dethiobiotin synthetase BioD (239 aa).

Residue 15 to 20 (EIGKTF) participates in ATP binding. A Mg(2+)-binding site is contributed by T19. Residue K40 is part of the active site. Residues D57, 118-121 (EGVG), and 178-179 (NH) contribute to the ATP site. Residues D57 and E118 each coordinate Mg(2+).

This sequence belongs to the dethiobiotin synthetase family. Homodimer. The cofactor is Mg(2+).

It is found in the cytoplasm. It carries out the reaction (7R,8S)-7,8-diammoniononanoate + CO2 + ATP = (4R,5S)-dethiobiotin + ADP + phosphate + 3 H(+). It functions in the pathway cofactor biosynthesis; biotin biosynthesis; biotin from 7,8-diaminononanoate: step 1/2. Catalyzes a mechanistically unusual reaction, the ATP-dependent insertion of CO2 between the N7 and N8 nitrogen atoms of 7,8-diaminopelargonic acid (DAPA, also called 7,8-diammoniononanoate) to form a ureido ring. The polypeptide is ATP-dependent dethiobiotin synthetase BioD (Burkholderia orbicola (strain MC0-3)).